Consider the following 141-residue polypeptide: Alpha-lactalbumin (141 aa).

The N-terminal stretch at 1-19 is a signal peptide; sequence MMPLVPLLLVSIVFPGIQA. Residues 20-141 enclose the C-type lysozyme domain; that stretch reads TQLTRCELTE…ENLEQWVCKK (122 aa). 4 cysteine pairs are disulfide-bonded: cysteine 25-cysteine 139, cysteine 47-cysteine 130, cysteine 80-cysteine 96, and cysteine 92-cysteine 110. N-linked (GlcNAc...) asparagine glycosylation is present at asparagine 64. 3 residues coordinate Ca(2+): aspartate 101, aspartate 106, and aspartate 107.

It belongs to the glycosyl hydrolase 22 family. Lactose synthase (LS) is a heterodimer of a catalytic component, beta1,4-galactosyltransferase (beta4Gal-T1) and a regulatory component, alpha-lactalbumin (LA). In terms of tissue distribution, mammary gland specific. Secreted in milk.

The protein resides in the secreted. In terms of biological role, regulatory subunit of lactose synthase, changes the substrate specificity of galactosyltransferase in the mammary gland making glucose a good acceptor substrate for this enzyme. This enables LS to synthesize lactose, the major carbohydrate component of milk. In other tissues, galactosyltransferase transfers galactose onto the N-acetylglucosamine of the oligosaccharide chains in glycoproteins. This chain is Alpha-lactalbumin (LALBA), found in Oryctolagus cuniculus (Rabbit).